Consider the following 114-residue polypeptide: Hemerythrin (114 aa).

7 residues coordinate Fe cation: His26, His55, Glu59, His74, His78, His102, and Asp107.

This sequence belongs to the hemerythrin family. Homooctamer.

Hemerythrin is a respiratory protein in blood cells of certain marine worms. The oxygen-binding site in each chain contains two iron atoms. This chain is Hemerythrin, found in Phascolopsis gouldii (Peanut worm).